We begin with the raw amino-acid sequence, 695 residues long: Follicle-stimulating hormone receptor (695 aa).

The N-terminal stretch at 1–17 (MSLLLVSLLAFLTLGSG) is a signal peptide. Disulfide bonds link Cys18-Cys25 and Cys23-Cys32. The LRRNT domain occupies 18 to 46 (CHHRICHCSNGVFLCQESKVTEIPPDLPR). Residues 18 to 366 (CHHRICHCSN…EDIMGHDILR (349 aa)) lie on the Extracellular side of the membrane. LRR repeat units follow at residues 49–72 (VELR…FGDL), 73–97 (EKIE…LPKL), 98–118 (HEIR…AFQN), 119–143 (LPNL…KIQS), 144–169 (LQKV…VGLS), 170–192 (FESM…AFNG), 193–216 (TQLD…VFQG), 217–240 (ASGP…GLEN), and 241–259 (LKKL…PSLE). N-linked (GlcNAc...) asparagine glycosylation is found at Asn191 and Asn199. 4 disulfides stabilise this stretch: Cys275–Cys346, Cys276–Cys292, Cys276–Cys356, and Cys292–Cys338. The N-linked (GlcNAc...) asparagine glycan is linked to Asn293. Tyr335 is modified (sulfotyrosine). Residues 367 to 387 (VLIWFISILAITGNIIVLVIL) form a helical membrane-spanning segment. The Cytoplasmic segment spans residues 388 to 398 (ITSQYKLTVPR). A helical transmembrane segment spans residues 399–421 (FLMCNLAFADLCIGIYLLLIASV). Residues 422-443 (DIHTKTQYHNYAIDWQTGAGCD) lie on the Extracellular side of the membrane. A disulfide bridge links Cys442 with Cys517. A helical transmembrane segment spans residues 444–465 (AAGFFTVFASELSVYTLTAITL). The Cytoplasmic segment spans residues 466-485 (ERWHTITHAMQLQCKVQLRH). The chain crosses the membrane as a helical span at residues 486-508 (AASIMLVGWIFAFTVALFPIFGI). Residues 509 to 528 (SSYMKVSICLPMDIDSPLSQ) are Extracellular-facing. The helical transmembrane segment at 529–550 (LYVVSLLVLNVLAFVVICGCYT) threads the bilayer. At 551-573 (HIYLTVRNPNIMSSSSDTKIAKR) the chain is on the cytoplasmic side. A helical transmembrane segment spans residues 574–597 (MAMLIFTDFLCMAPISFFAISASL). The Extracellular portion of the chain corresponds to 598 to 608 (KVPLITVSKSK). Residues 609 to 630 (ILLVLFYPINSCANPFLYAIFT) form a helical membrane-spanning segment. The Cytoplasmic portion of the chain corresponds to 631 to 695 (KNFRRDVFIL…LIPLSRLAQN (65 aa)).

Belongs to the G-protein coupled receptor 1 family. FSH/LSH/TSH subfamily. In terms of assembly, homotrimer. Functions as a homotrimer binding the FSH hormone heterodimer composed of CGA and FSHB. Interacts with ARRB2. Interacts with APPL2; interaction is independent of follicle stimulating hormone stimulation. Post-translationally, N-glycosylated; indirectly required for FSH-binding, possibly via a conformational change that allows high affinity binding of hormone. In terms of processing, sulfated.

The protein resides in the cell membrane. Its function is as follows. G protein-coupled receptor for follitropin, the follicle-stimulating hormone. Through cAMP production activates the downstream PI3K-AKT and ERK1/ERK2 signaling pathways. In Sus scrofa (Pig), this protein is Follicle-stimulating hormone receptor (FSHR).